The sequence spans 635 residues: 1-deoxy-D-xylulose-5-phosphate synthase (635 aa).

Thiamine diphosphate is bound by residues His-73 and 114–116 (SHA). Asp-146 contacts Mg(2+). Residues 147 to 148 (GA), Asn-176, Tyr-287, and Glu-368 contribute to the thiamine diphosphate site. Position 176 (Asn-176) interacts with Mg(2+).

This sequence belongs to the transketolase family. DXPS subfamily. In terms of assembly, homodimer. The cofactor is Mg(2+). It depends on thiamine diphosphate as a cofactor.

It carries out the reaction D-glyceraldehyde 3-phosphate + pyruvate + H(+) = 1-deoxy-D-xylulose 5-phosphate + CO2. It functions in the pathway metabolic intermediate biosynthesis; 1-deoxy-D-xylulose 5-phosphate biosynthesis; 1-deoxy-D-xylulose 5-phosphate from D-glyceraldehyde 3-phosphate and pyruvate: step 1/1. Its function is as follows. Catalyzes the acyloin condensation reaction between C atoms 2 and 3 of pyruvate and glyceraldehyde 3-phosphate to yield 1-deoxy-D-xylulose-5-phosphate (DXP). The chain is 1-deoxy-D-xylulose-5-phosphate synthase from Corynebacterium diphtheriae (strain ATCC 700971 / NCTC 13129 / Biotype gravis).